Consider the following 130-residue polypeptide: Large ribosomal subunit protein bL19 (130 aa).

The protein belongs to the bacterial ribosomal protein bL19 family.

In terms of biological role, this protein is located at the 30S-50S ribosomal subunit interface and may play a role in the structure and function of the aminoacyl-tRNA binding site. This Burkholderia vietnamiensis (strain G4 / LMG 22486) (Burkholderia cepacia (strain R1808)) protein is Large ribosomal subunit protein bL19.